Consider the following 284-residue polypeptide: 4-diphosphocytidyl-2-C-methyl-D-erythritol kinase (284 aa).

Residue Lys-10 is part of the active site. ATP is bound at residue 95–105 (PVAAGLGGGSS). Asp-137 is an active-site residue.

The protein belongs to the GHMP kinase family. IspE subfamily.

The catalysed reaction is 4-CDP-2-C-methyl-D-erythritol + ATP = 4-CDP-2-C-methyl-D-erythritol 2-phosphate + ADP + H(+). It participates in isoprenoid biosynthesis; isopentenyl diphosphate biosynthesis via DXP pathway; isopentenyl diphosphate from 1-deoxy-D-xylulose 5-phosphate: step 3/6. Functionally, catalyzes the phosphorylation of the position 2 hydroxy group of 4-diphosphocytidyl-2C-methyl-D-erythritol. This Levilactobacillus brevis (strain ATCC 367 / BCRC 12310 / CIP 105137 / JCM 1170 / LMG 11437 / NCIMB 947 / NCTC 947) (Lactobacillus brevis) protein is 4-diphosphocytidyl-2-C-methyl-D-erythritol kinase.